A 103-amino-acid chain; its full sequence is Large ribosomal subunit protein bL21 (103 aa).

It belongs to the bacterial ribosomal protein bL21 family. As to quaternary structure, part of the 50S ribosomal subunit. Contacts protein L20.

In terms of biological role, this protein binds to 23S rRNA in the presence of protein L20. This is Large ribosomal subunit protein bL21 from Shewanella denitrificans (strain OS217 / ATCC BAA-1090 / DSM 15013).